Reading from the N-terminus, the 217-residue chain is Small ribosomal subunit protein uS3 (217 aa).

Residues 40–110 (IRELVNKSFT…EVYINIHEVR (71 aa)) form the KH type-2 domain.

It belongs to the universal ribosomal protein uS3 family. In terms of assembly, part of the 30S ribosomal subunit. Forms a tight complex with proteins S10 and S14.

Its function is as follows. Binds the lower part of the 30S subunit head. Binds mRNA in the 70S ribosome, positioning it for translation. The protein is Small ribosomal subunit protein uS3 of Rickettsia bellii (strain OSU 85-389).